The primary structure comprises 440 residues: Tubulin beta-3 chain (440 aa).

GTP is bound by residues Gln2, Glu60, Ser129, Gly133, Thr134, Gly135, Asn195, and Asn217. Glu60 contributes to the Mg(2+) binding site. The interval 411 to 440 is disordered; it reads SEYQQYQDATADEEGEYEDEEEEEPEHGYE. The span at 420–440 shows a compositional bias: acidic residues; the sequence is TADEEGEYEDEEEEEPEHGYE.

Belongs to the tubulin family. Dimer of alpha and beta chains. A typical microtubule is a hollow water-filled tube with an outer diameter of 25 nm and an inner diameter of 15 nM. Alpha-beta heterodimers associate head-to-tail to form protofilaments running lengthwise along the microtubule wall with the beta-tubulin subunit facing the microtubule plus end conferring a structural polarity. Microtubules usually have 13 protofilaments but different protofilament numbers can be found in some organisms and specialized cells. Requires Mg(2+) as cofactor.

Its subcellular location is the cytoplasm. It is found in the cytoskeleton. Its function is as follows. Tubulin is the major constituent of microtubules, a cylinder consisting of laterally associated linear protofilaments composed of alpha- and beta-tubulin heterodimers. Microtubules grow by the addition of GTP-tubulin dimers to the microtubule end, where a stabilizing cap forms. Below the cap, tubulin dimers are in GDP-bound state, owing to GTPase activity of alpha-tubulin. The sequence is that of Tubulin beta-3 chain (TUBB3) from Pisum sativum (Garden pea).